The sequence spans 158 residues: UPF0260 protein RL1394 (158 aa).

The protein belongs to the UPF0260 family.

The polypeptide is UPF0260 protein RL1394 (Rhizobium johnstonii (strain DSM 114642 / LMG 32736 / 3841) (Rhizobium leguminosarum bv. viciae)).